The chain runs to 66 residues: uncharacterized protein (66 aa).

One can recognise an HTH cro/C1-type domain in the interval 5–59 (VKELRARFGYSQEKLGETVGVTRQTVAAIEKGDYVPSLLLALKICKAFSMKMEDV). Positions 16-35 (QEKLGETVGVTRQTVAAIEK) form a DNA-binding region, H-T-H motif.

This is an uncharacterized protein from Bacillus subtilis (strain 168).